The sequence spans 424 residues: Glutamyl-tRNA reductase (424 aa).

Substrate is bound by residues 49-52, Ser108, 113-115, and Gln119; these read TCNR and EPQ. Cys50 functions as the Nucleophile in the catalytic mechanism. 188-193 is a binding site for NADP(+); it reads GAGETI.

This sequence belongs to the glutamyl-tRNA reductase family. As to quaternary structure, homodimer.

It carries out the reaction (S)-4-amino-5-oxopentanoate + tRNA(Glu) + NADP(+) = L-glutamyl-tRNA(Glu) + NADPH + H(+). The protein operates within porphyrin-containing compound metabolism; protoporphyrin-IX biosynthesis; 5-aminolevulinate from L-glutamyl-tRNA(Glu): step 1/2. Catalyzes the NADPH-dependent reduction of glutamyl-tRNA(Glu) to glutamate 1-semialdehyde (GSA). This Hahella chejuensis (strain KCTC 2396) protein is Glutamyl-tRNA reductase.